A 398-amino-acid chain; its full sequence is Candidapepsin-2 (398 aa).

The N-terminal stretch at 1–18 is a signal peptide; that stretch reads MFLKNIFIGLAIALLVDA. A propeptide spans 19-56 (activation peptide); the sequence is TPTTTKRSAGFVALDFSVVKTPKAFPVTNGQEGKTSKR. The Peptidase A1 domain occupies 70–384; sequence YAADITVGSN…DLDNNEISLA (315 aa). D88 is an active-site residue. 88–90 provides a ligand contact to pepstatin A; sequence DTG. Cysteines 103 and 115 form a disulfide. Pepstatin A contacts are provided by residues 141–142 and 274–278; these read GD and DSGTT. D274 is a catalytic residue. C312 and C350 are joined by a disulfide. 2 N-linked (GlcNAc...) asparagine glycosylation sites follow: N313 and N321.

The protein belongs to the peptidase A1 family. In terms of assembly, monomer. Post-translationally, O-glycosylated.

It is found in the secreted. The catalysed reaction is Preferential cleavage at the carboxyl of hydrophobic amino acids, but fails to cleave 15-Leu-|-Tyr-16, 16-Tyr-|-Leu-17 and 24-Phe-|-Phe-25 of insulin B chain. Activates trypsinogen, and degrades keratin.. In Candida albicans (strain WO-1) (Yeast), this protein is Candidapepsin-2 (SAP2).